Consider the following 2168-residue polypeptide: MESGERLPSSAASSTTPTSSSTPSVASVVSKGGLSTGVASLSSTINPCGHLFRTAGDQPFNLSTVSSAFPMVSHPVFGLHSASSGHSEFGGLGTLGTPTALAAHPQLASFPGAEWWRTTDAHTRTGATFFPPLLGIPPLFAPPAQNHDSSSFHSRTSGKSNRNGPEKGVNGSINGSNTSSVIGINTSVLSTTASSSMGQTKSTSSGGGNRKCNQEQSKNQPLDARVDKIKDKKPRKKAMESSSNSDSDSGTSSDTSSEGISSSDSDDLEEDEEEEDQSIEESEDDDSDSESEAQHKSNNQVLLHGISDPKADGQKATEKAQEKRIHQPLPLASESQTHSFQSQQKQPQVLSQQLPFIFQSSQAKEESVNKHTSVIQSTGLVSNVKPLSLVNQAKKETYMKLIVPSPDVLKAGNKNTSEESSLLTSELRSKREQYKQAFPSQLKKQESSKSLKKVIAALSNPKATSSSPAHPKQTLENNHPNPFLTNALLGNHQPNGVIQSVIQEAPLALTTKTKMQSKINENIAAASSTPFSSPVNLSTSGRRTPGNQTPVMPSASPILHSQGKEKAVSNNVNPVKTQHHSHPAKSLVEQFRGTDSDIPSSKDSEDSNEDEEEDDEEEDEEDDEDDESDDSQSESDSNSESDTEGSEEEDDDDKDQDESDSDTEGEKTSMKLNKTTSSVKSPSMSLTGHSTPRNLHIAKAPGSAPAALCSESQSPAFLGTSSSTLTSSPHSGTSKRRRVTDERELRIPLEYGWQRETRIRNFGGRLQGEVAYYAPCGKKLRQYPEVIKYLSRNGIMDISRDNFSFSAKIRVGDFYEARDGPQGMQWCLLKEEDVIPRIRAMEGRRGRPPNPDRQRAREESRMRRRKGRPPNVGNAEFLDNADAKLLRKLQAQEIARQAAQIKLLRKLQKQEQARVAKEAKKQQAIMAAEEKRKQKEQIKIMKQQEKIKRIQQIRMEKELRAQQILEAKKKKKEEAANAKLLEAEKRIKEKEMRRQQAVLLKHQERERRRQHMMLMKAMEARKKAEEKERLKQEKRDEKRLNKERKLEQRRLELEMAKELKKPNEDMCLADQKPLPELPRIPGLVLSGSTFSDCLMVVQFLRNFGKVLGFDVNIDVPNLSVLQEGLLNIGDSMGEVQDLLVRLLSAAVCDPGLITGYKAKTALGEHLLNVGVNRDNVSEILQIFMEAHCGQTELTESLKTKAFQAHTPAQKASVLAFLINELACSKSVVSEIDKNIDYMSNLRRDKWVVEGKLRKLRIIHAKKTGKRDTSGGIDLGEEQHPLGTPTPGRKRRRKGGDSDYDDDDDDDSDDQGDEDDEDEEDKEDKKGKKTDICEDEDEGDQAASVEELEKQIEKLSKQQSQYRRKLFDASHSLRSVMFGQDRYRRRYWILPQCGGIFVEGMESGEGLEEIAKEREKLKKAESVQIKEEMFETSGDSLNCSNTDHCEQKEDLKEKDNTNLFLQKPGSFSKLSKLLEVAKMPPESEVMTPKPNAGANGCTLSYQNSGKHSLGSVQSTATQSNVEKADSNNLFNTGSSGPGKFYSPLPNDQLLKTLTEKNRQWFSLLPRTPCDDTSLTHADMSTASLVTPQSQPPSKSPSPTPAPLGSSAQNPVGLNPFALSPLQVKGGVSMMGLQFCGWPTGVVTSNIPFTSSVPSLGSGLGLSEGNGNSFLTSNVASSKSESPVPQNEKATSAQPAAVEVAKPVDFPSPKPIPEEMQFGWWRIIDPEDLKALLKVLHLRGIREKALQKQIQKHLDYITQACLKNKDVAIIELNENEENQVTRDIVENWSVEEQAMEMDLSVLQQVEDLERRVASASLQVKGWMCPEPASEREDLVYFEHKSFTKLCKEHDGEFTGEDESSAHALERKSDNPLDIAVTRLADLERNIERRIEEDIAPGLRVWRRALSEARSAAQVALCIQQLQKSIAWEKSIMKVYCQICRKGDNEELLLLCDGCDKGCHTYCHRPKITTIPDGDWFCPACIAKASGQTLKIKKLHVKGKKTNESKKGKKVTLTGDTEDEDSASTSSSLKRGNKDLKKRKMEENTSINLSKQESFTSVKKPKRDDSKDLALCSMILTEMETHEDAWPFLLPVNLKLVPGYKKVIKKPMDFSTIREKLSSGQYPNLETFALDVRLVFDNCETFNEDDSDIGRAGHNMRKYFEKKWTDTFKVS.

Disordered stretches follow at residues 1–29 (MESG…ASVV), 140–348 (FAPP…KQPQ), 409–428 (LKAG…SELR), 459–479 (SNPK…ENNH), 528–698 (STPF…LHIA), 719–740 (GTSS…RRVT), 841–872 (MEGR…PPNV), and 1021–1043 (RKKA…LNKE). Residues 8–29 (PSSAASSTTPTSSSTPSVASVV) show a composition bias toward low complexity. Composition is skewed to polar residues over residues 146 to 163 (NHDS…SNRN) and 171 to 193 (GSIN…STTA). Composition is skewed to low complexity over residues 194-204 (SSSMGQTKSTS) and 240-263 (ESSS…ISSS). Residues 264–291 (DSDDLEEDEEEEDQSIEESEDDDSDSES) show a composition bias toward acidic residues. The segment covering 307–325 (SDPKADGQKATEKAQEKRI) has biased composition (basic and acidic residues). A compositionally biased stretch (low complexity) spans 335-348 (SQTHSFQSQQKQPQ). Polar residues-rich tracts occupy residues 461–479 (PKAT…ENNH) and 528–551 (STPF…QTPV). Over residues 592-605 (RGTDSDIPSSKDSE) the composition is skewed to basic and acidic residues. The segment covering 606–663 (DSNEDEEEDDEEEDEEDDEDDESDDSQSESDSNSESDTEGSEEEDDDDKDQDESDSDT) has biased composition (acidic residues). Positions 670-693 (MKLNKTTSSVKSPSMSLTGHSTPR) are enriched in polar residues. Residues 720 to 732 (TSSSTLTSSPHSG) are compositionally biased toward low complexity. An MBD domain is found at 739-810 (VTDERELRIP…DNFSFSAKIR (72 aa)). Residues 841–861 (MEGRRGRPPNPDRQRAREESR) show a composition bias toward basic and acidic residues. Positions 883-1061 (AKLLRKLQAQ…ELEMAKELKK (179 aa)) form a coiled coil. Positions 1087-1152 (GSTFSDCLMV…LSAAVCDPGL (66 aa)) constitute a DDT domain. The tract at residues 1265–1341 (KRDTSGGIDL…CEDEDEGDQA (77 aa)) is disordered. Positions 1297-1321 (SDYDDDDDDDSDDQGDEDDEDEEDK) are enriched in acidic residues. Basic and acidic residues predominate over residues 1322-1331 (EDKKGKKTDI). Positions 1334–1375 (DEDEGDQAASVEELEKQIEKLSKQQSQYRRKLFDASHSLRSV) form a coiled coil. Residue K1425 forms a Glycyl lysine isopeptide (Lys-Gly) (interchain with G-Cter in SUMO2) linkage. At K1462 the chain carries N6-acetyllysine. Residues S1465 and S1467 each carry the phosphoserine modification. Polar residues predominate over residues 1503 to 1533 (SGKHSLGSVQSTATQSNVEKADSNNLFNTGS). 3 disordered regions span residues 1503–1542 (SGKH…FYSP), 1582–1607 (SLVT…SSAQ), and 1670–1694 (TSNV…AQPA). A compositionally biased stretch (pro residues) spans 1588–1600 (SQPPSKSPSPTPA). Residues 1670 to 1692 (TSNVASSKSESPVPQNEKATSAQ) show a composition bias toward polar residues. Position 1680 is a phosphoserine (S1680). Residues 1931–1981 (KVYCQICRKGDNEELLLLCDGCDKGCHTYCHRPKITTIPDGDWFCPACIAK) form a PHD-type zinc finger. The tract at residues 1998–2040 (KTNESKKGKKVTLTGDTEDEDSASTSSSLKRGNKDLKKRKMEE) is disordered. T2014 carries the phosphothreonine modification. S2019 is subject to Phosphoserine. Basic and acidic residues predominate over residues 2029–2040 (GNKDLKKRKMEE). The Bromo domain maps to 2060–2164 (RDDSKDLALC…KYFEKKWTDT (105 aa)).

The protein belongs to the WAL family. Component of the BRF-1 ISWI chromatin remodeling complex, at least composed of SMARCA1 and BAZ2B, which regulates the spacing of histone octamers on the DNA template to facilitate access to DNA. Within the BRF-1 ISWI chromatin remodeling complex interacts with SMARCA1; the interaction is direct. Component of the BRF-5 ISWI chromatin remodeling complex, at least composed of SMARCA5/SNF2H and BAZ2B, which regulates the spacing of histone octamers on the DNA template to facilitate access to DNA. Within the BRF-5 ISWI chromatin remodeling complex interacts with SMARCA5/SNF2H; the interaction is direct. Interacts with acetylated lysine residues on histone H1.4, H2A, H2B, H3 and H4 (in vitro). Interacts with EHMT1. Expressed at varying levels in several tissues, whereas a smaller transcript was expressed specifically in testis.

The protein localises to the nucleus. In terms of biological role, regulatory subunit of the ATP-dependent BRF-1 and BRF-5 ISWI chromatin remodeling complexes, which form ordered nucleosome arrays on chromatin and facilitate access to DNA during DNA-templated processes such as DNA replication, transcription, and repair. Both complexes regulate the spacing of nucleosomes along the chromatin and have the ability to slide mononucleosomes to the center of a DNA template. The BRF-1 ISWI chromatin remodeling complex has a lower ATP hydrolysis rate than the BRF-5 ISWI chromatin remodeling complex. Chromatin reader protein, which may play a role in transcriptional regulation via interaction with ISWI. Involved in positively modulating the rate of age-related behavioral deterioration. Represses the expression of mitochondrial function-related genes, perhaps by occupying their promoter regions, working in concert with histone methyltransferase EHMT1. The polypeptide is Bromodomain adjacent to zinc finger domain protein 2B (BAZ2B) (Homo sapiens (Human)).